The chain runs to 217 residues: Large ribosomal subunit protein uL3 (217 aa).

A disordered region spans residues 137 to 160 (VSASHGSHRNHRKPGSIGASSTPS).

Belongs to the universal ribosomal protein uL3 family. As to quaternary structure, part of the 50S ribosomal subunit. Forms a cluster with proteins L14 and L19.

In terms of biological role, one of the primary rRNA binding proteins, it binds directly near the 3'-end of the 23S rRNA, where it nucleates assembly of the 50S subunit. The chain is Large ribosomal subunit protein uL3 from Clavibacter michiganensis subsp. michiganensis (strain NCPPB 382).